A 124-amino-acid chain; its full sequence is Mitochondrial import inner membrane translocase subunit TIM16 (124 aa).

Residues 58-109 (EAQQILNISKLSPEEVQNYEHLFKVNDKSVGDSFYLQSKVVRAKERLDEELQ) form a J-like region. Ser69 carries the phosphoserine modification.

This sequence belongs to the TIM16/PAM16 family. Probable component of the PAM complex at least composed of a mitochondrial HSP70 protein, GRPEL1 or GRPEL2, TIMM44, TIMM16/PAM16 and TIMM14/DNAJC19. Interacts with DNAJC19. Directly interacts with DNAJC15; this interaction counteracts DNAJC15-dependent stimulation of HSPA9 ATPase activity. Associates with the TIM23 complex.

The protein resides in the mitochondrion inner membrane. Regulates ATP-dependent protein translocation into the mitochondrial matrix. Inhibits DNAJC19 stimulation of HSPA9/Mortalin ATPase activity. The sequence is that of Mitochondrial import inner membrane translocase subunit TIM16 (Magmas-ps1) from Rattus norvegicus (Rat).